Here is a 271-residue protein sequence, read N- to C-terminus: Cytosolic Fe-S cluster assembly factor NUBP2 (271 aa).

Position 1 is an N-acetylmethionine (methionine 1). 22 to 29 serves as a coordination point for ATP; sequence GKGGVGKS. Cysteine 196 and cysteine 199 together coordinate [4Fe-4S] cluster.

This sequence belongs to the Mrp/NBP35 ATP-binding proteins family. NUBP2/CFD1 subfamily. Heterotetramer of 2 NUBP1 and 2 NUBP2 chains. Interacts with KIFC1. Interacts with NUBP1. [4Fe-4S] cluster is required as a cofactor.

It localises to the nucleus. Its subcellular location is the cytoplasm. The protein localises to the cytoskeleton. It is found in the microtubule organizing center. The protein resides in the centrosome. It localises to the cilium axoneme. Its subcellular location is the centriole. Component of the cytosolic iron-sulfur (Fe/S) protein assembly (CIA) machinery. Required for maturation of extramitochondrial Fe-S proteins. The NUBP1-NUBP2 heterotetramer forms a Fe-S scaffold complex, mediating the de novo assembly of an Fe-S cluster and its transfer to target apoproteins. Negatively regulates cilium formation and structure. The chain is Cytosolic Fe-S cluster assembly factor NUBP2 from Bos taurus (Bovine).